The chain runs to 701 residues: Pre-mRNA-splicing factor CLF1 (701 aa).

HAT repeat units follow at residues 43–75 (SYQQ…WEIE), 78–110 (HDFP…LELS), 112–144 (KNIN…TEEM), 146–177 (KNYP…FEAR), 179–210 (EEKE…YEME), 214–253 (DDVN…SWTS), 266–299 (EIFK…FEKN), 309–341 (SVLI…LLQN), 343–378 (SNKS…FWIW), 388–424 (NNPV…FELR), 545–576 (MQYD…FESS), and 601–642 (SQIE…VNGS).

The protein belongs to the crooked-neck family. As to quaternary structure, associated with the spliceosome.

It is found in the nucleus. Functionally, involved in pre-mRNA splicing and cell cycle progression. Required for the spliceosome assembly and initiation of the DNA replication. The polypeptide is Pre-mRNA-splicing factor CLF1 (CLF1) (Candida albicans (strain SC5314 / ATCC MYA-2876) (Yeast)).